A 1839-amino-acid chain; its full sequence is Nuclear pore complex protein DDB_G0274915 (1839 aa).

Composition is skewed to polar residues over residues 1-27 (MNGR…NTIN) and 35-54 (NGSL…QTNK). 10 disordered regions span residues 1-54 (MNGR…QTNK), 78-150 (DESS…ISDD), 325-367 (KQFD…PNAD), 480-568 (PLNK…FSTT), 589-636 (TTIA…GGGV), 657-705 (VSTS…DVPG), 739-810 (TTTT…DSKT), 818-837 (PTTE…SSLF), 846-1106 (TTPS…FSSN), and 1129-1839 (TTAT…AKKK). Residues 80–90 (SSSSSSSSSSS) show a composition bias toward low complexity. Polar residues predominate over residues 91–101 (YDDGNNIPQKG). Composition is skewed to low complexity over residues 102 to 148 (SSTT…INIS) and 329 to 343 (DNNN…SIYN). Residues 344–354 (RQSIYSPNSKI) show a composition bias toward polar residues. Low complexity-rich tracts occupy residues 495–568 (TYAT…FSTT) and 589–607 (TTIA…SSSS). A compositionally biased stretch (polar residues) spans 616 to 628 (MFTSDSNKSNLFS). Composition is skewed to low complexity over residues 658 to 671 (STST…SKSS) and 739 to 760 (TTTT…TTDK). Positions 761–773 (SSADKSSADKSST) are enriched in basic and acidic residues. Low complexity-rich tracts occupy residues 774–803 (DKST…TTTT), 827–837 (PTTSLTSSSLF), and 846–871 (TTPS…NTTT). 2 stretches are compositionally biased toward acidic residues: residues 896–923 (ESDE…EAEE) and 944–958 (LEAE…DSDE). 2 stretches are compositionally biased toward low complexity: residues 1005–1021 (GSSL…SFLT) and 1046–1060 (SSSS…IPTT). Residues 1061 to 1070 (SKKEKIDDKP) show a composition bias toward basic and acidic residues. The span at 1071–1092 (STTTTTTTTSLFGSTTTSGLFS) shows a compositional bias: low complexity. Residues 1093–1106 (NPSTTSTGSLFSSN) show a composition bias toward polar residues. Low complexity-rich tracts occupy residues 1129–1242 (TTAT…FGST) and 1250–1292 (ATTT…GLFG). Positions 1293 to 1310 (ASSSTTPSTGLFGSATTP) are enriched in polar residues. Low complexity-rich tracts occupy residues 1311-1384 (STGL…TTPP) and 1397-1498 (LFGT…TTAT). The segment covering 1507 to 1521 (TAPSTGLFGSTTATN) has biased composition (polar residues). Over residues 1522–1673 (PSTGLFGSTT…SSTPFGASPF (152 aa)) the composition is skewed to low complexity. Residues 1676–1708 (PTSTSSPPFGAPTSASSTPFGAPQISTSSSTNL) are compositionally biased toward polar residues. A compositionally biased stretch (low complexity) spans 1712–1810 (ASSSTAAPSF…PFGSTPSTAP (99 aa)).

The polypeptide is Nuclear pore complex protein DDB_G0274915 (Dictyostelium discoideum (Social amoeba)).